Reading from the N-terminus, the 261-residue chain is Calcium-binding protein 8 (261 aa).

A disordered region spans residues 1 to 41 (MRLPEQPGDGKPENETKGDQETPERGEEPRRSPAPDFPTWE). Over 1–234 (MRLPEQPGDG…QNRQTCVRKS (234 aa)) the chain is Cytoplasmic. A compositionally biased stretch (basic and acidic residues) spans 8–33 (GDGKPENETKGDQETPERGEEPRRSP). EF-hand domains are found at residues 78 to 113 (EELD…LGYM) and 114 to 149 (PSEV…KLVS). The Ca(2+) site is built by Asp91, Asp93, Asn95, Glu102, Asp127, Asp129, Asp131, Gln133, and Glu138. Residues 235–255 (LICAFAMAFIISVMLIAANQI) traverse the membrane as a helical; Anchor for type IV membrane protein segment. At 256–261 (LRSGME) the chain is on the extracellular side.

In terms of assembly, interacts with PI4KB. This binding competes with FREQ/NCS1 binding in a calcium-dependent manner. As to expression, brain-specific. High expression in the cerebellum, hippocampus, and cortex.

It localises to the golgi apparatus. The protein localises to the trans-Golgi network membrane. It is found in the cytoplasm. The protein resides in the perinuclear region. Its subcellular location is the cell membrane. Negatively regulates Golgi-to-plasma membrane trafficking by interacting with PI4KB and inhibiting its activity. May play a role in the physiology of neurons and is potentially important in memory and learning. This chain is Calcium-binding protein 8 (Caln1), found in Mus musculus (Mouse).